A 104-amino-acid chain; its full sequence is UPF0145 protein TM1040_1243 (104 aa).

This sequence belongs to the UPF0145 family.

In Ruegeria sp. (strain TM1040) (Silicibacter sp.), this protein is UPF0145 protein TM1040_1243.